Reading from the N-terminus, the 360-residue chain is Protein RecA (360 aa).

77 to 84 provides a ligand contact to ATP; sequence GPESSGKT.

This sequence belongs to the RecA family.

It is found in the cytoplasm. Its function is as follows. Can catalyze the hydrolysis of ATP in the presence of single-stranded DNA, the ATP-dependent uptake of single-stranded DNA by duplex DNA, and the ATP-dependent hybridization of homologous single-stranded DNAs. It interacts with LexA causing its activation and leading to its autocatalytic cleavage. The sequence is that of Protein RecA from Chelativorans sp. (strain BNC1).